We begin with the raw amino-acid sequence, 230 residues long: Large ribosomal subunit protein uL1 (230 aa).

It belongs to the universal ribosomal protein uL1 family. In terms of assembly, part of the 50S ribosomal subunit.

In terms of biological role, binds directly to 23S rRNA. The L1 stalk is quite mobile in the ribosome, and is involved in E site tRNA release. Its function is as follows. Protein L1 is also a translational repressor protein, it controls the translation of the L11 operon by binding to its mRNA. The polypeptide is Large ribosomal subunit protein uL1 (Granulibacter bethesdensis (strain ATCC BAA-1260 / CGDNIH1)).